The chain runs to 254 residues: UPF0246 protein FTW_0267 (254 aa).

This sequence belongs to the UPF0246 family.

The protein is UPF0246 protein FTW_0267 of Francisella tularensis subsp. tularensis (strain WY96-3418).